The following is an 831-amino-acid chain: Probable glucan 1,3-beta-glucosidase D (831 aa).

6 stretches are compositionally biased toward basic and acidic residues: residues 1–24 (MPSH…YREV), 44–56 (RRDD…RSHE), 79–93 (RSHD…RSRA), 102–115 (SRRD…EYRR), 137–151 (RDGQ…DREA), and 198–213 (QRER…MESK). Disordered regions lie at residues 1-179 (MPSH…SGSH) and 192-241 (HYDE…GQSK). Topologically, residues 1-297 (MPSHSRSRDR…AQPPFWKRKK (297 aa)) are cytoplasmic. A helical; Signal-anchor for type II membrane protein transmembrane segment spans residues 298 to 318 (WWIVIGVLVVVLAIVIPVAVV). Residues 319 to 831 (MSKKHGHDDD…PSFGDLPEYY (513 aa)) are Extracellular-facing. N-linked (GlcNAc...) asparagine glycosylation is found at Asn376, Asn381, Asn393, Asn410, Asn442, Asn546, and Asn558. The active-site Proton donor is Glu597. N-linked (GlcNAc...) asparagine glycosylation is found at Asn610, Asn636, Asn669, and Asn689. Glu702 (nucleophile) is an active-site residue.

Belongs to the glycosyl hydrolase 5 (cellulase A) family.

The protein resides in the cell membrane. It catalyses the reaction Successive hydrolysis of beta-D-glucose units from the non-reducing ends of (1-&gt;3)-beta-D-glucans, releasing alpha-glucose.. Glucosidase involved in the degradation of cellulosic biomass. Active on lichenan. This Aspergillus oryzae (strain ATCC 42149 / RIB 40) (Yellow koji mold) protein is Probable glucan 1,3-beta-glucosidase D (exgD).